We begin with the raw amino-acid sequence, 354 residues long: Ubiquinol oxidase 1a, mitochondrial (354 aa).

The transit peptide at 1-62 (MMITRGGAKA…RAPTIGGMRF (62 aa)) directs the protein to the mitochondrion. Positions 68-99 (LGEKTPMKEEDANQKKTENESTGGDAAGGNNK) are disordered. The segment covering 72–86 (TPMKEEDANQKKTEN) has biased composition (basic and acidic residues). A helical membrane pass occupies residues 179-199 (AMMLETVAAVPGMVGGMLLHC). Fe cation-binding residues include glutamate 183, glutamate 222, and histidine 225. The chain crosses the membrane as a helical span at residues 241-261 (ALVITVQGVFFNAYFLGYLIS). Fe cation-binding residues include glutamate 273, glutamate 324, and histidine 327.

Belongs to the alternative oxidase family. Homodimer; disulfide-linked. Fe cation serves as cofactor. In terms of tissue distribution, expressed in roots, stems, cotyledons, leaves and flowers. High expression in sepals.

The protein localises to the mitochondrion inner membrane. The catalysed reaction is 2 a ubiquinol + O2 = 2 a ubiquinone + 2 H2O. When the two monomeric subunits are covalently linked by a S-S bond, the enzyme is essentially inactive. When the disulfide bond is reduced, its component sulfhydryls can associate with K-keto acids through formation of a thiohemiacetal, resulting in enzyme activation. Activated by glyoxylate, irrespective to the substitution found at Cys-127. That suggests the presence of a second activation site, possibly Cys-177. Functionally, catalyzes the cyanide-resistant oxidation of ubiquinol and the reduction of molecular oxygen to water, but does not translocate protons and consequently is not linked to oxidative phosphorylation. Increases respiration when the cytochrome respiratory pathway is restricted, or in response to low temperatures. In Arabidopsis thaliana (Mouse-ear cress), this protein is Ubiquinol oxidase 1a, mitochondrial (AOX1A).